The following is a 463-amino-acid chain: Probable Xaa-Pro aminopeptidase pepP (463 aa).

Mn(2+) contacts are provided by aspartate 259, aspartate 270, glutamate 393, and glutamate 433.

This sequence belongs to the peptidase M24B family. The cofactor is Mn(2+).

The catalysed reaction is Release of any N-terminal amino acid, including proline, that is linked to proline, even from a dipeptide or tripeptide.. In terms of biological role, catalyzes the removal of a penultimate prolyl residue from the N-termini of peptides. This Pyrenophora teres f. teres (strain 0-1) (Barley net blotch fungus) protein is Probable Xaa-Pro aminopeptidase pepP (pepP).